A 302-amino-acid polypeptide reads, in one-letter code: Ornithine carbamoyltransferase (302 aa).

Carbamoyl phosphate contacts are provided by residues 52–55 (STRT), Gln-79, Arg-103, and 130–133 (HPCQ). Residues Asn-161, Asp-221, and 225 to 226 (SM) contribute to the L-ornithine site. Carbamoyl phosphate-binding positions include 261–262 (CL) and Arg-289.

The protein belongs to the aspartate/ornithine carbamoyltransferase superfamily. OTCase family.

Its subcellular location is the cytoplasm. The catalysed reaction is carbamoyl phosphate + L-ornithine = L-citrulline + phosphate + H(+). It participates in amino-acid biosynthesis; L-arginine biosynthesis; L-arginine from L-ornithine and carbamoyl phosphate: step 1/3. Functionally, reversibly catalyzes the transfer of the carbamoyl group from carbamoyl phosphate (CP) to the N(epsilon) atom of ornithine (ORN) to produce L-citrulline. This is Ornithine carbamoyltransferase from Syntrophotalea carbinolica (strain DSM 2380 / NBRC 103641 / GraBd1) (Pelobacter carbinolicus).